We begin with the raw amino-acid sequence, 1142 residues long: Zinc finger MYM-type protein 1 (1142 aa).

A Glycyl lysine isopeptide (Lys-Gly) (interchain with G-Cter in SUMO2) cross-link involves residue Lys25. 3 consecutive MYM-type zinc fingers follow at residues 110 to 148 (QLFC…PKDV), 160 to 203 (KTFC…QYEV), and 210 to 245 (HNLC…SSSL). A Glycyl lysine isopeptide (Lys-Gly) (interchain with G-Cter in SUMO2) cross-link involves residue Lys284. Residues 300-331 (ELFCSINCFSAYSKAKMESSSVSVVSVVHDTS) form an MYM-type 4 zinc finger. Residues 385 to 396 (KSSPSEPSNAVA) are compositionally biased toward polar residues. The interval 385–413 (KSSPSEPSNAVASSSTEQPSVSPSSSVFS) is disordered. The span at 397–413 (SSSTEQPSVSPSSSVFS) shows a compositional bias: low complexity. Residues 452-538 (KSRSIKKSCC…YQFCDGAVSD (87 aa)) form a TTF-type zinc finger.

The protein localises to the nucleus. This is Zinc finger MYM-type protein 1 (ZMYM1) from Homo sapiens (Human).